The following is a 114-amino-acid chain: Probable acid stress chaperone HdeA (114 aa).

The first 26 residues, Met1–Ala26, serve as a signal peptide directing secretion. An intrachain disulfide couples Cys46 to Cys94.

It belongs to the HdeA family.

It is found in the periplasm. Required for optimal acid stress protection. Exhibits a chaperone-like activity only at low pH by suppressing non-specifically the aggregation of denaturated periplasmic proteins. The sequence is that of Probable acid stress chaperone HdeA from Brucella suis biovar 1 (strain 1330).